Here is a 508-residue protein sequence, read N- to C-terminus: TATA box-binding protein-like 1 (508 aa).

Disordered stretches follow at residues 145–190, 236–262, and 456–479; these read QISY…QMHH, EPIPVKIEVPDVPPEGTSAANEEPMPD, and QKKRKRKAPVNRGPPIKRERFDDS.

It belongs to the TBP family.

Its subcellular location is the nucleus. May be a general transcription factor. Plays an essential role for RNA polymerase II/ama-1 transcription in early embryos whereby it activates a subset of RNA polymerase II promoters and facilitates the reestablishment of transcription after mitosis. The protein is TATA box-binding protein-like 1 of Caenorhabditis elegans.